Here is a 290-residue protein sequence, read N- to C-terminus: Glycine--tRNA ligase alpha subunit (290 aa).

Belongs to the class-II aminoacyl-tRNA synthetase family. In terms of assembly, tetramer of two alpha and two beta subunits.

The protein resides in the cytoplasm. It catalyses the reaction tRNA(Gly) + glycine + ATP = glycyl-tRNA(Gly) + AMP + diphosphate. The sequence is that of Glycine--tRNA ligase alpha subunit from Zymomonas mobilis subsp. mobilis (strain ATCC 31821 / ZM4 / CP4).